Consider the following 477-residue polypeptide: Cysteine--tRNA ligase (477 aa).

Zn(2+) is bound at residue C29. The 'HIGH' region signature appears at 31 to 41; sequence PTVYDYPHLGH. Zn(2+) contacts are provided by C209, H234, and E238. The short motif at 266–270 is the 'KMSKS' region element; the sequence is KMSKS. K269 is an ATP binding site.

This sequence belongs to the class-I aminoacyl-tRNA synthetase family. Zn(2+) is required as a cofactor.

Its subcellular location is the cytoplasm. It carries out the reaction tRNA(Cys) + L-cysteine + ATP = L-cysteinyl-tRNA(Cys) + AMP + diphosphate. The protein is Cysteine--tRNA ligase (cysS) of Pyrococcus abyssi (strain GE5 / Orsay).